We begin with the raw amino-acid sequence, 158 residues long: NAD(P)H-quinone oxidoreductase subunit J, chloroplastic (158 aa).

This sequence belongs to the complex I 30 kDa subunit family. As to quaternary structure, NDH is composed of at least 16 different subunits, 5 of which are encoded in the nucleus.

The protein resides in the plastid. Its subcellular location is the chloroplast thylakoid membrane. It carries out the reaction a plastoquinone + NADH + (n+1) H(+)(in) = a plastoquinol + NAD(+) + n H(+)(out). The catalysed reaction is a plastoquinone + NADPH + (n+1) H(+)(in) = a plastoquinol + NADP(+) + n H(+)(out). In terms of biological role, NDH shuttles electrons from NAD(P)H:plastoquinone, via FMN and iron-sulfur (Fe-S) centers, to quinones in the photosynthetic chain and possibly in a chloroplast respiratory chain. The immediate electron acceptor for the enzyme in this species is believed to be plastoquinone. Couples the redox reaction to proton translocation, and thus conserves the redox energy in a proton gradient. This chain is NAD(P)H-quinone oxidoreductase subunit J, chloroplastic, found in Lemna minor (Common duckweed).